The chain runs to 1213 residues: MVDVNRFKSMQITLASPSKVRSWSYGEVKKPETINYRTLKPEREGLFDEVIFGPTKDWECACGKYKRIRYKGIVCDRCGVEVTRAKVRRERMGHIELKAPVSHIWYFKGIPSRMGLTLDMSPRALEEVIYFAAYVVIDPKDTPLEPKSLLTEREYREKLQEYGHGSFVAKMGAEAIQDLLKRVDLAAEIAELKEELKSASGQKRIKAVRRLDVLDAFNKSGNKPEWMVLNILPVIPPDLRPMVQLDGGRFAASDLNDLYRRVINRNNRLARLLELNAPGIIVQNEKRMLQEAVDALIDNGRRGRPITGPGSRPLKSLSHMLKGKQGRFRQNLLGKRVDFSGRSVIAVGPTLKMYQCGVPREMAIELFKPFVMREIVAKEYAGNVKAAKRMVERGDERIWDILEEVIKEHPVLLNRAPTLHRLGIQAFEPVLIDGKALRLHPLVCEAYNADFDGDQMAIHVPLSEEAQAEARLLMLAAEHILNPKDGKPVVTPSQDMVLGNYYLTMEDAGREGEGMIFKDKDEAVMAYRNGYAHLHSRVGIAVDSMPNKPWKDNQRHKIMVTTVGKILFNDIMPEDLPYLQEPNNANLTEGTPDKYFLEPGQDIQEVIDGLDINVPFKKKNLGNIIAETFKRFRTTETSAFLDRLKDLGYYHSTLAGLTVGIADIPVIDNKAEIIDAAHHRVEEINKAFRRGLMTDDDRYVAVTTTWREAKEALEKRLIETQDPKNPIVMMMDSGARGNISNFSQLAGMRGLMAAPNGRIMELPILSNFREGLSVLEMFFSTHGARKGMTDTALKTADSGYLTRRLVDVAQDVIIREDDCGTDRGLLIRAITDGKEVTETLEERLQGRYTRKSVKHPETGEVLIGADQLITEDMARKIVDAGVEEVTIRSVFTCATRHGVCRHCYGINLATGDAVEVGEAVGTIAAQSIGEPGTQLTMRTFHTGGVASNTDITQGLPRIQEIFEARNPKGEAVITEVKGNVVEIEEDASTRTKKVYVQGKTGMGEYVVPFTARMKVEVGDEVNRGAALTEGSIQPKRLLEVRDTLSVETYLLAEVQKVYRSQGVEIGDKHVEVMVRQMLRKVRVMDPGDTDLLPGTLMDISDFTDANKDIVISGGIPATSRPVLMGITKASLETNSFLSAASFQETTRVLTDAAIRGKKDHLLGLKENVIIGKIIPAGTGMARYRNIEPQAMNEIEVIDHTEVSAEAVFTAEAE.

Zn(2+) contacts are provided by Cys60, Cys62, Cys75, and Cys78. 3 residues coordinate Mg(2+): Asp450, Asp452, and Asp454. Positions 819, 893, 900, and 903 each coordinate Zn(2+).

This sequence belongs to the RNA polymerase beta' chain family. The RNAP catalytic core consists of 2 alpha, 1 beta, 1 beta' and 1 omega subunit. When a sigma factor is associated with the core the holoenzyme is formed, which can initiate transcription. Mg(2+) is required as a cofactor. Requires Zn(2+) as cofactor.

The enzyme catalyses RNA(n) + a ribonucleoside 5'-triphosphate = RNA(n+1) + diphosphate. Functionally, DNA-dependent RNA polymerase catalyzes the transcription of DNA into RNA using the four ribonucleoside triphosphates as substrates. In Streptococcus pyogenes serotype M2 (strain MGAS10270), this protein is DNA-directed RNA polymerase subunit beta'.